Here is a 400-residue protein sequence, read N- to C-terminus: Putative lysosomal acid lipase/cholesteryl ester hydrolase (400 aa).

A signal peptide spans 1 to 17; that stretch reads MWRLIIIAILFQGLVNS. N-linked (GlcNAc...) asparagine glycans are attached at residues Asn34, Asn129, and Asn159. Residues 78 to 378 form the AB hydrolase-1 domain; that stretch reads PAVFLQHGLL…EWEHLDFIWG (301 aa). Ser172 functions as the Charge relay system in the catalytic mechanism. Residue Asn271 is glycosylated (N-linked (GlcNAc...) asparagine). His372 functions as the Charge relay system in the catalytic mechanism.

Belongs to the AB hydrolase superfamily. Lipase family. Expressed by the venom gland.

The protein resides in the secreted. The enzyme catalyses a sterol ester + H2O = a sterol + a fatty acid + H(+). Functionally, in physiological conditions, is crucial for intracellular hydrolysis of cholesteryl esters and triglycerides that have been internalized via receptor-mediated endocytosis of lipoprotein particles. In venom, the biological contribution is unknown. The protein is Putative lysosomal acid lipase/cholesteryl ester hydrolase of Crotalus adamanteus (Eastern diamondback rattlesnake).